Consider the following 451-residue polypeptide: Cobalamin reductase PduS (451 aa).

4Fe-4S ferredoxin-type domains lie at 255–284 (TVLS…HELS) and 300–330 (PQLL…MRIN). 8 residues coordinate [4Fe-4S] cluster: Cys264, Cys267, Cys270, Cys274, Cys309, Cys312, Cys315, and Cys320.

Belongs to the PduS cobalamin reductase family. In terms of assembly, monomeric when purified anaerobically, dimeric under aerobic conditions. Forms a complex with PduO. Interacts with PduT, probably via the N-terminus of PduS. The cofactor is [4Fe-4S] cluster. It depends on FMN as a cofactor.

The protein localises to the bacterial microcompartment. The protein operates within polyol metabolism; 1,2-propanediol degradation. In terms of biological role, a protein that aids in conversion of cob(III)alamin to cob(II)alamin and then to cob(I)alamin in the bacterial microcompartment (BMC) dedicated to 1,2-propanediol (1,2-PD) degradation. The latter step requires PduO. No free cob(I)alamin is released, suggesting a complex is formed with PduO that finishes conversion to adenosylcobalamin. PduS and PduO allow regeneration of the adenosylcobalamin cofactor within the BMC. Another study showed reduction of cob(II)alamin to cob(I)alamin in the absence of PduO. Both reactions require NADH. Cyanocobalamin (CN-Cbl) is not a substrate for the first reaction. Cobalamin reduction probably occurs spontaneously in the presence of free reduced flavin nucleotides, this protein may be involved in electron transfer for this reduction. Its function is as follows. The 1,2-PD-specific bacterial microcompartment (BMC) concentrates low levels of 1,2-PD catabolic enzymes, concentrates volatile reaction intermediates thus enhancing pathway flux and keeps the level of toxic, mutagenic propionaldehyde low. This chain is Cobalamin reductase PduS, found in Salmonella typhimurium (strain LT2 / SGSC1412 / ATCC 700720).